We begin with the raw amino-acid sequence, 231 residues long: Demethylmenaquinone methyltransferase (231 aa).

Residues Thr62, Asp80, 102–103 (DA), and Ser119 each bind S-adenosyl-L-methionine.

Belongs to the class I-like SAM-binding methyltransferase superfamily. MenG/UbiE family.

It carries out the reaction a 2-demethylmenaquinol + S-adenosyl-L-methionine = a menaquinol + S-adenosyl-L-homocysteine + H(+). Its pathway is quinol/quinone metabolism; menaquinone biosynthesis; menaquinol from 1,4-dihydroxy-2-naphthoate: step 2/2. Its function is as follows. Methyltransferase required for the conversion of demethylmenaquinol (DMKH2) to menaquinol (MKH2). The protein is Demethylmenaquinone methyltransferase of Streptomyces avermitilis (strain ATCC 31267 / DSM 46492 / JCM 5070 / NBRC 14893 / NCIMB 12804 / NRRL 8165 / MA-4680).